Consider the following 287-residue polypeptide: Protease HtpX (287 aa).

The next 2 helical transmembrane spans lie at 4–24 (IFLL…VMSI) and 33–53 (GGLL…SLAI). H139 is a binding site for Zn(2+). The active site involves E140. H143 serves as a coordination point for Zn(2+). 2 helical membrane passes run 154-174 (LIQG…ASII) and 195-215 (AVVF…VAYF). Zn(2+) is bound at residue E220.

Belongs to the peptidase M48B family. Requires Zn(2+) as cofactor.

The protein resides in the cell inner membrane. This is Protease HtpX from Shewanella loihica (strain ATCC BAA-1088 / PV-4).